A 678-amino-acid polypeptide reads, in one-letter code: uncharacterized protein (678 aa).

2 helical membrane passes run 14–34 (LMFA…WTGL) and 180–200 (GAVI…IGGF).

The protein belongs to the mycobacterial PPE family.

The protein resides in the cell membrane. This is an uncharacterized protein from Mycobacterium tuberculosis (strain ATCC 25618 / H37Rv).